The sequence spans 886 residues: Alanine--tRNA ligase (886 aa).

Residues His570, His574, Cys673, and His677 each contribute to the Zn(2+) site.

It belongs to the class-II aminoacyl-tRNA synthetase family. It depends on Zn(2+) as a cofactor.

The protein localises to the cytoplasm. It carries out the reaction tRNA(Ala) + L-alanine + ATP = L-alanyl-tRNA(Ala) + AMP + diphosphate. In terms of biological role, catalyzes the attachment of alanine to tRNA(Ala) in a two-step reaction: alanine is first activated by ATP to form Ala-AMP and then transferred to the acceptor end of tRNA(Ala). Also edits incorrectly charged Ser-tRNA(Ala) and Gly-tRNA(Ala) via its editing domain. In Chlorobium chlorochromatii (strain CaD3), this protein is Alanine--tRNA ligase.